The following is a 139-amino-acid chain: MNMTKMAKANEIKREWVVLDAEGKTFGRLMTQVATLLRGKHRPDYTPHVDCGDFVVIVNASKVVFSGLKLEAKEYFTHSGYFGSTKSQTLQELLEKNPEKLFRLAARGMLPKTKLGRAMLKKLKVYAGAEHPHTAQVTK.

This sequence belongs to the universal ribosomal protein uL13 family. Part of the 50S ribosomal subunit.

In terms of biological role, this protein is one of the early assembly proteins of the 50S ribosomal subunit, although it is not seen to bind rRNA by itself. It is important during the early stages of 50S assembly. This chain is Large ribosomal subunit protein uL13, found in Wolinella succinogenes (strain ATCC 29543 / DSM 1740 / CCUG 13145 / JCM 31913 / LMG 7466 / NCTC 11488 / FDC 602W) (Vibrio succinogenes).